Here is a 553-residue protein sequence, read N- to C-terminus: Formate--tetrahydrofolate ligase (553 aa).

Residue 63-70 (TPAGEGKT) coordinates ATP.

The protein belongs to the formate--tetrahydrofolate ligase family.

The enzyme catalyses (6S)-5,6,7,8-tetrahydrofolate + formate + ATP = (6R)-10-formyltetrahydrofolate + ADP + phosphate. It participates in one-carbon metabolism; tetrahydrofolate interconversion. The polypeptide is Formate--tetrahydrofolate ligase (Oenococcus oeni (strain ATCC BAA-331 / PSU-1)).